We begin with the raw amino-acid sequence, 553 residues long: Glutamine--tRNA ligase (553 aa).

A 'HIGH' region motif is present at residues 34–44 (PEPNGYLHIGH). Residues 35–37 (EPN) and 41–47 (HIGHAKS) each bind ATP. L-glutamine contacts are provided by aspartate 68 and tyrosine 213. Residues threonine 232 and 262–263 (RL) each bind ATP. Positions 269–273 (LTSKR) match the 'KMSKS' region motif.

This sequence belongs to the class-I aminoacyl-tRNA synthetase family. In terms of assembly, monomer.

It localises to the cytoplasm. It carries out the reaction tRNA(Gln) + L-glutamine + ATP = L-glutaminyl-tRNA(Gln) + AMP + diphosphate. This chain is Glutamine--tRNA ligase, found in Psychromonas ingrahamii (strain DSM 17664 / CCUG 51855 / 37).